A 23-amino-acid chain; its full sequence is Basic phospholipase A2 CB2 (23 aa).

Ca(2+) serves as cofactor. Contains 7 disulfide bonds. Expressed by the venom gland.

It localises to the secreted. It carries out the reaction a 1,2-diacyl-sn-glycero-3-phosphocholine + H2O = a 1-acyl-sn-glycero-3-phosphocholine + a fatty acid + H(+). Its function is as follows. Snake venom phospholipase A2 (PLA2) that shows presynaptic neurotoxicity. PLA2 catalyzes the calcium-dependent hydrolysis of the 2-acyl groups in 3-sn-phosphoglycerides. This Crotalus durissus cumanensis (South American rattlesnake) protein is Basic phospholipase A2 CB2.